The chain runs to 150 residues: Small ribosomal subunit protein uS13 (150 aa).

Positions Q131–K150 are disordered.

Belongs to the universal ribosomal protein uS13 family. In terms of assembly, part of the 30S ribosomal subunit. Forms a loose heterodimer with protein S19. Forms two bridges to the 50S subunit in the 70S ribosome.

Its function is as follows. Located at the top of the head of the 30S subunit, it contacts several helices of the 16S rRNA. In the 70S ribosome it contacts the 23S rRNA (bridge B1a) and protein L5 of the 50S subunit (bridge B1b), connecting the 2 subunits; these bridges are implicated in subunit movement. This Methanocaldococcus jannaschii (strain ATCC 43067 / DSM 2661 / JAL-1 / JCM 10045 / NBRC 100440) (Methanococcus jannaschii) protein is Small ribosomal subunit protein uS13.